The sequence spans 91 residues: ATP synthase subunit c (91 aa).

2 helical membrane-spanning segments follow: residues 4–24 (FTMC…GTGI) and 53–73 (IGLA…LIIL).

The protein belongs to the ATPase C chain family. As to quaternary structure, F-type ATPases have 2 components, F(1) - the catalytic core - and F(0) - the membrane proton channel. F(1) has five subunits: alpha(3), beta(3), gamma(1), delta(1), epsilon(1). F(0) has three main subunits: a(1), b(2) and c(10-14). The alpha and beta chains form an alternating ring which encloses part of the gamma chain. F(1) is attached to F(0) by a central stalk formed by the gamma and epsilon chains, while a peripheral stalk is formed by the delta and b chains.

The protein resides in the cell inner membrane. F(1)F(0) ATP synthase produces ATP from ADP in the presence of a proton or sodium gradient. F-type ATPases consist of two structural domains, F(1) containing the extramembraneous catalytic core and F(0) containing the membrane proton channel, linked together by a central stalk and a peripheral stalk. During catalysis, ATP synthesis in the catalytic domain of F(1) is coupled via a rotary mechanism of the central stalk subunits to proton translocation. In terms of biological role, key component of the F(0) channel; it plays a direct role in translocation across the membrane. A homomeric c-ring of between 10-14 subunits forms the central stalk rotor element with the F(1) delta and epsilon subunits. This is ATP synthase subunit c from Trichlorobacter lovleyi (strain ATCC BAA-1151 / DSM 17278 / SZ) (Geobacter lovleyi).